The primary structure comprises 616 residues: Chaperone protein HscA (616 aa).

The protein belongs to the heat shock protein 70 family.

Functionally, chaperone involved in the maturation of iron-sulfur cluster-containing proteins. Has a low intrinsic ATPase activity which is markedly stimulated by HscB. Involved in the maturation of IscU. This chain is Chaperone protein HscA, found in Escherichia coli O7:K1 (strain IAI39 / ExPEC).